The following is a 214-amino-acid chain: MRIILLGAPGAGKGTQAQFIMEKYGIPQISTGDMLRAAIKAGTELGKQAKAVIDAGQLVSDEIILGLIKERIAQEDCAKGFLLDGFPRTIPQADGLKEMGVAVDYVIEFDVADDVIVERMAGRRAHLPSGRTYHVVYNPPKVEGKDDVTGEDLVVRDDDKEETVRARLGVYHSQTAPLIEYYGKEAAESNTKYLKFDGTKQVAQVSADIEKALA.

10–15 contacts ATP; the sequence is GAGKGT. An NMP region spans residues 30 to 59; the sequence is STGDMLRAAIKAGTELGKQAKAVIDAGQLV. AMP-binding positions include threonine 31, arginine 36, 57 to 59, 85 to 88, and glutamine 92; these read QLV and GFPR. The interval 122 to 159 is LID; sequence GRRAHLPSGRTYHVVYNPPKVEGKDDVTGEDLVVRDDD. Residues arginine 123 and 132–133 each bind ATP; that span reads TY. AMP contacts are provided by arginine 156 and arginine 167. Lysine 200 is a binding site for ATP.

This sequence belongs to the adenylate kinase family. In terms of assembly, monomer.

Its subcellular location is the cytoplasm. The enzyme catalyses AMP + ATP = 2 ADP. The protein operates within purine metabolism; AMP biosynthesis via salvage pathway; AMP from ADP: step 1/1. Its function is as follows. Catalyzes the reversible transfer of the terminal phosphate group between ATP and AMP. Plays an important role in cellular energy homeostasis and in adenine nucleotide metabolism. The sequence is that of Adenylate kinase from Vibrio vulnificus (strain YJ016).